A 1958-amino-acid polypeptide reads, in one-letter code: MMATRRTGLSEGDGDKLKACEVSKNKDGKEQSETVSLSEDETFSWPGPKTVTLKRTSQGFGFTLRHFIVYPPESAIQFSYKDEENGNRGGKQRNRLEPMDTIFVKQVKEGGPAFEAGLCTGDRIIKVNGESVIGKTYSQVIALIQNSDTTLELSVMPKDEDILQVLQFTKDVTALAYSQDAYLKGNEAYSGNARNIPEPPPICYPWLPSAPSAMAQPVEISPPDSSLSKQQTSTPVLTQPGRAYRMEIQVPPSPTDVAKSNTAVCVCNESVRTVIVPSEKVVDLLSNRNNHTGPSHRTEEVRYGVSEQTSLKTVSRTTSPPLSIPTTHLIHQPAGSRSLEPSGILLKSGNYSGHSDGISSSRSQAVEAPSVSVNHYSPNSHQHIDWKNYKTYKEYIDNRRLHIGCRTIQERLDSLRAASQSTTDYNQVVPNRTTLQGRRRSTSHDRVPQSVQIRQRSVSQERLEDSVLMKYCPRSASQGALTSPSVSFSNHRTRSWDYIEGQDETLENVNSGTPIPDSNGEKKQTYKWSGFTEQDDRRGICERPRQQEIHKSFRGSNFTVAPSVVNSDNRRMSGRGVGSVSQFKKIPPDLKTLQSNRNFQTTCGMSLPRGISQDRSPLVKVRSNSLKAPSTHVTKPSFSQKSFVSIKDQRPVNHLHQNSLLNQQTWVRTDSAPDQQVETGKSPSLSGASAKPAPQSSENAGTSDLELPVSQRNQDLSLQEAETEQSDTLDNKEAVILREKPPSGRQTPQPLRHQSYILAVNDQETGSDTTCWLPNDARREVHIKRMEERKASSTSPPGDSLASIPFIDEPTSPSIDHDIAHIPASAVISASTSQVPSIATVPPCLTTSAPLIRRQLSHDHESVGPPSLDAQPNSKTERSKSYDEGLDDYREDAKLSFKHVSSLKGIKIADSQKSSEDSGSRKDSSSEVFSDAAKEGWLHFRPLVTDKGKRVGGSIRPWKQMYVVLRGHSLYLYKDKREQTTPSEEEQPISVNACLIDISYSETKRKNVFRLTTSDCECLFQAEDRDDMLAWIKTIQESSNLNEEDTGVTNRDLISRRIKEYNNLMSKAEQLPKTPRQSLSIRQTLLGAKSEPKTQSPHSPKEESERKLLSKDDTSPPKDKGTWRKGIPSIMRKTFEKKPTATGTFGVRLDDCPPAHTNRYIPLIVDICCKLVEERGLEYTGIYRVPGNNAAISSMQEELNKGMADIDIQDDKWRDLNVISSLLKSFFRKLPEPLFTNDKYADFIEANRKEDPLDRLKTLKRLIHDLPEHHYETLKFLSAHLKTVAENSEKNKMEPRNLAIVFGPTLVRTSEDNMTHMVTHMPDQYKIVETLIQHHDWFFTEEGAEEPLTTVQEESTVDSQPVPNIDHLLTNIGRTGVSPGDVSDSATSDSTKSKGSWGSGKDQYSRELLVSSIFAAASRKRKKPKEKAQPSSSEDELDNVFFKKENVEQCHNDTKEESKKESETLGRKQKIIIAKENSTRKDPSTTKDEKISLGKESTPSEEPSPPHNSKHNKSPTLSCRFAILKESPRSLLAQKSSHLEETGSDSGTLLSTSSQASLARFSMKKSTSPETKHSEFLANVSTITSDYSTTSSATYLTSLDSSRLSPEVQSVAESKGDEADDERSELISEGRPVETDSESEFPVFPTALTSERLFRGKLQEVTKSSRRNSEGSELSCTEGSLTSSLDSRRQLFSSHKLIECDTLSRKKSARFKSDSGSLGDAKNEKEAPSLTKVFDVMKKGKSTGSLLTPTRGESEKQEPTWKTKIADRLKLRPRAPADDMFGVGNHKVNAETAKRKSIRRRHTLGGHRDATEISVLNFWKVHEQSGERESELSAVNRLKPKCSAQDLSISDWLARERLRTSTSDLSRGEIGDPQTENPSTREIATTDTPLSLHCNTGSSSSTLASTNRPLLSIPPQSPDQINGESFQNVSKNASSAANAQPHKLSETPGSKAEFHPCL.

The interval 1-42 is disordered; that stretch reads MMATRRTGLSEGDGDKLKACEVSKNKDGKEQSETVSLSEDET. A compositionally biased stretch (basic and acidic residues) spans 13–32; sequence DGDKLKACEVSKNKDGKEQS. A phosphoserine mark is found at serine 36 and serine 57. The PDZ domain maps to 50–159; that stretch reads TVTLKRTSQG…TLELSVMPKD (110 aa). Composition is skewed to polar residues over residues 286-295, 306-325, and 418-436; these read SNRNNHTGPS, SEQT…LSIP, and ASQS…TTLQ. 2 disordered regions span residues 286–325 and 418–458; these read SNRN…LSIP and ASQS…QRSV. Positions 448 to 458 are enriched in low complexity; it reads PQSVQIRQRSV. Position 459 is a phosphoserine (serine 459). Residues arginine 554 and arginine 575 each carry the omega-N-methylarginine modification. Serine 612, serine 616, and serine 625 each carry phosphoserine. A compositionally biased stretch (polar residues) spans 659–687; that stretch reads SLLNQQTWVRTDSAPDQQVETGKSPSLSG. The disordered stretch occupies residues 659 to 751; the sequence is SLLNQQTWVR…PSGRQTPQPL (93 aa). Position 717 is a phosphoserine (serine 717). The span at 729 to 742 shows a compositional bias: basic and acidic residues; it reads LDNKEAVILREKPP. Threonine 747 is subject to Phosphothreonine. A phosphoserine mark is found at serine 857, serine 862, and serine 881. A disordered region spans residues 859–885; it reads DHESVGPPSLDAQPNSKTERSKSYDEG. Over residues 875–885 the composition is skewed to basic and acidic residues; it reads KTERSKSYDEG. At tyrosine 882 the chain carries Phosphotyrosine. Phosphoserine occurs at positions 924, 926, 954, 1099, and 1115. The segment at 930–1097 is interaction with ARF1 and ARF6; sequence SDAAKEGWLH…AKSEPKTQSP (168 aa). In terms of domain architecture, PH spans 931–1040; that stretch reads DAAKEGWLHF…WIKTIQESSN (110 aa). Positions 1086-1133 are disordered; sequence LGAKSEPKTQSPHSPKEESERKLLSKDDTSPPKDKGTWRKGIPSIMRK. Over residues 1099-1122 the composition is skewed to basic and acidic residues; sequence SPKEESERKLLSKDDTSPPKDKGT. The Rho-GAP domain occupies 1147–1339; it reads VRLDDCPPAH…TLIQHHDWFF (193 aa). Disordered regions lie at residues 1348-1401, 1418-1575, 1598-1642, and 1655-1686; these read LTTV…GSGK, SRKR…KHSE, SLDS…SEFP, and RGKL…SSLD. Positions 1349 to 1362 are enriched in polar residues; sequence TTVQEESTVDSQPV. Low complexity predominate over residues 1383–1401; sequence SDSATSDSTKSKGSWGSGK. 3 positions are modified to phosphoserine: serine 1418, serine 1432, and serine 1433. Basic and acidic residues-rich tracts occupy residues 1441–1466 and 1477–1493; these read FFKK…ETLG and NSTR…KISL. Lysine 1444 is covalently cross-linked (Glycyl lysine isopeptide (Lys-Gly) (interchain with G-Cter in SUMO)). A Phosphoserine modification is found at serine 1504. Position 1516 is a phosphothreonine (threonine 1516). Serine 1527 carries the post-translational modification Phosphoserine. Positions 1544–1559 are enriched in low complexity; sequence SDSGTLLSTSSQASLA. The segment at 1592 to 1861 is interaction with CTNNA1; sequence SATYLTSLDS…WLARERLRTS (270 aa). Residues 1603–1612 show a composition bias toward polar residues; the sequence is RLSPEVQSVA. Basic and acidic residues predominate over residues 1624–1634; sequence SELISEGRPVE. Serine 1669 is subject to Phosphoserine. Residues 1671-1686 are compositionally biased toward polar residues; it reads GSELSCTEGSLTSSLD. Threonine 1682 carries the post-translational modification Phosphothreonine. Serine 1742 bears the Phosphoserine mark. Residues 1860–1958 are disordered; it reads TSTSDLSRGE…GSKAEFHPCL (99 aa). Residues 1874–1909 show a composition bias toward polar residues; that stretch reads QTENPSTREIATTDTPLSLHCNTGSSSSTLASTNRP. Position 1917 is a phosphoserine (serine 1917). Polar residues predominate over residues 1918–1931; the sequence is PDQINGESFQNVSK.

As to quaternary structure, interacts with GTP-bound ARF1 and ARF6. Interacts with CTNNA1. In terms of processing, sumoylated with SUMO2 and SUMO3 in proliferating lymphocytes. In terms of tissue distribution, widely expressed with higher expression in brain, heart, skeletal muscle and placenta.

The protein localises to the golgi apparatus membrane. The protein resides in the cell junction. Its subcellular location is the cytoplasmic vesicle membrane. It is found in the cytoplasm. It localises to the cytoskeleton. Functions as a GTPase-activating protein (GAP) for RHOA and CDC42. Downstream partner of ARF1 which may control Golgi apparatus structure and function. Also required for CTNNA1 recruitment to adherens junctions. The protein is Rho GTPase-activating protein 21 (ARHGAP21) of Homo sapiens (Human).